A 105-amino-acid polypeptide reads, in one-letter code: Large ribosomal subunit protein uL24 (105 aa).

This sequence belongs to the universal ribosomal protein uL24 family. As to quaternary structure, part of the 50S ribosomal subunit.

Its function is as follows. One of two assembly initiator proteins, it binds directly to the 5'-end of the 23S rRNA, where it nucleates assembly of the 50S subunit. One of the proteins that surrounds the polypeptide exit tunnel on the outside of the subunit. In Hahella chejuensis (strain KCTC 2396), this protein is Large ribosomal subunit protein uL24.